The following is a 297-amino-acid chain: Bax inhibitor 1 (297 aa).

At 1–53 the chain is on the lumenal side; it reads MSGPPPPYEEQSSHLYGQPASSQDGNAFIPEDFKYSTVVISCEPIIRQRFMHK. A helical membrane pass occupies residues 54–74; sequence VYSLLSCQLLASLSFCYWASV. At 75 to 85 the chain is on the cytoplasmic side; it reads STSLQNFIMSH. A helical transmembrane segment spans residues 86-106; the sequence is IALFYICMVVSLVSCIWLAVS. The Lumenal portion of the chain corresponds to 107–146; the sequence is PRPEDYEASVPEPLLTGSSEEPAQEQRRLPWYVLSSYKQK. The helical transmembrane segment at 147–167 threads the bilayer; sequence LTLLSIFTLSEAYCLSLVTLA. At 168-171 the chain is on the cytoplasmic side; the sequence is YDKD. A helical membrane pass occupies residues 172 to 192; it reads TVLSALLITTIVVVGVSLTAL. Residues 193–208 lie on the Lumenal side of the membrane; the sequence is SERFENVLNSATSIYY. Residues 209-229 traverse the membrane as a helical segment; the sequence is WLNWGLWIMIGMGLTALLFGW. Topologically, residues 230 to 239 are cytoplasmic; the sequence is NTHSSKFNLL. Residues 240-260 form a helical membrane-spanning segment; that stretch reads YGWLGAILFTAYLFIDTQLIF. Over 261–270 the chain is Lumenal; sequence RKVYPDEEVR. Residues 271-291 traverse the membrane as a helical segment; it reads CAMMLYLDIVNLFLSILRILA. Residues 292 to 297 lie on the Cytoplasmic side of the membrane; that stretch reads NSNDDN.

Belongs to the BI1 family. LFG subfamily.

It is found in the endoplasmic reticulum membrane. It localises to the vacuole membrane. The protein resides in the mitochondrion membrane. Its function is as follows. Links the unfolded protein response and programmed cell death and mediates mitochondrial-dependent apoptosis. Induces cell death and disruption of the mitochondrial transmembrane potential via the mitochondrial phosphate carrier MIR1. Dispensible for starvation-induced autophagy. The protein is Bax inhibitor 1 (BXI1) of Saccharomyces cerevisiae (strain ATCC 204508 / S288c) (Baker's yeast).